Reading from the N-terminus, the 383-residue chain is Adaptive-response sensory kinase SasA (383 aa).

The region spanning 152–365 (MVAHELRTPL…CFTFTVPIWQ (214 aa)) is the Histidine kinase domain. Histidine 155 carries the post-translational modification Phosphohistidine; by autocatalysis.

Homooligomerizes. Interacts with KaiC. Participates in the KaiABC clock complex, whose core is composed of a KaiC homohexamer, 6 KaiB and up to 6 KaiA dimers. SasA and KaiB(fs) compete to bind to KaiC.

It catalyses the reaction ATP + protein L-histidine = ADP + protein N-phospho-L-histidine.. In terms of biological role, member of the two-component regulatory system SasA/RpaA involved in genome-wide circadian gene expression. One of several clock output pathways. Participates in the Kai clock protein complex, the main circadian regulator in cyanobacteria, via its interaction with KaiC. KaiC enhances the autophosphorylation activity of SasA, which then transfers its phosphate group to RpaA to activate it. In addition to its output function, recruits fold-shifted KaiB (KaiB(fs)) to KaiC to cooperatively form the KaiB(6):KaiC(6) complex (independent of SasA kinase activity). Required for robustness of the circadian rhythm of gene expression and is involved in clock output, also required for adaptation to light/dark cycles. The protein is Adaptive-response sensory kinase SasA of Synechococcus sp. (strain CC9902).